We begin with the raw amino-acid sequence, 87 residues long: Small ribosomal subunit protein uS15c (87 aa).

Belongs to the universal ribosomal protein uS15 family. In terms of assembly, part of the 30S ribosomal subunit.

It localises to the plastid. It is found in the chloroplast. In Nymphaea alba (White water-lily), this protein is Small ribosomal subunit protein uS15c (rps15).